Here is a 250-residue protein sequence, read N- to C-terminus: MSRKPIIAGNWKMNKNPQEAQAFVEAIAGKLPAGDKIEAAIAAPAVDLNALLWFAKDSELKVAAQNCYFEDAGAFTGETSPKVLAEMGVNYVVIGHSERRDYFHETDEDINKKAHAIFRNGLTPIICCGESLETYEAGKAVEFVGAQVSAALKDLTADQVASLVIAYEPIWAIGTGKSATKDDAQNMCKAVRDVVAADFGQEVADKVRVQYGGSVNPSNVAEYMACPDVDGALVGGASLEAESFLALLNF.

A substrate-binding site is contributed by 10–12 (NWK). The active-site Electrophile is the His96. Glu168 functions as the Proton acceptor in the catalytic mechanism. Substrate contacts are provided by residues Gly174, Ser214, and 235–236 (GG).

This sequence belongs to the triosephosphate isomerase family. Homodimer.

Its subcellular location is the cytoplasm. It carries out the reaction D-glyceraldehyde 3-phosphate = dihydroxyacetone phosphate. It functions in the pathway carbohydrate biosynthesis; gluconeogenesis. The protein operates within carbohydrate degradation; glycolysis; D-glyceraldehyde 3-phosphate from glycerone phosphate: step 1/1. Involved in the gluconeogenesis. Catalyzes stereospecifically the conversion of dihydroxyacetone phosphate (DHAP) to D-glyceraldehyde-3-phosphate (G3P). The polypeptide is Triosephosphate isomerase (Streptococcus suis (strain 98HAH33)).